Reading from the N-terminus, the 236-residue chain is Conserved regulator of innate immunity protein 3 (236 aa).

A mitochondrion-targeting transit peptide spans 1-36 (MNTASLVRSLSRVALRSSQVVRMAAPRHFSQSAKVL).

It belongs to the MAM33 family.

The protein resides in the mitochondrion matrix. The protein is Conserved regulator of innate immunity protein 3 (cri-3) of Caenorhabditis elegans.